We begin with the raw amino-acid sequence, 83 residues long: RNA-binding protein Hfq (83 aa).

In terms of domain architecture, Sm spans 9-69 (DYFLNQLRKD…ISTFAPARNV (61 aa)).

This sequence belongs to the Hfq family. In terms of assembly, homohexamer.

Functionally, RNA chaperone that binds small regulatory RNA (sRNAs) and mRNAs to facilitate mRNA translational regulation in response to envelope stress, environmental stress and changes in metabolite concentrations. Also binds with high specificity to tRNAs. In Exiguobacterium sibiricum (strain DSM 17290 / CCUG 55495 / CIP 109462 / JCM 13490 / 255-15), this protein is RNA-binding protein Hfq.